Consider the following 317-residue polypeptide: Uridylate kinase (317 aa).

9-12 (KISG) lines the ATP pocket. Glycine 49 is a binding site for UMP. Residues glycine 50 and arginine 54 each coordinate ATP. UMP-binding positions include aspartate 69 and 130–137 (TGRPYFTT). ATP contacts are provided by asparagine 158, tyrosine 164, and aspartate 167.

Belongs to the UMP kinase family. Homohexamer.

The protein resides in the cytoplasm. The catalysed reaction is UMP + ATP = UDP + ADP. Its pathway is pyrimidine metabolism; CTP biosynthesis via de novo pathway; UDP from UMP (UMPK route): step 1/1. Its activity is regulated as follows. Inhibited by UTP. Its function is as follows. Catalyzes the reversible phosphorylation of UMP to UDP. The chain is Uridylate kinase from Malacoplasma penetrans (strain HF-2) (Mycoplasma penetrans).